The sequence spans 547 residues: Mucin-13 (547 aa).

A compositionally biased stretch (low complexity) spans 1-210 (MSQSSGGTST…TVTSSSSTGS (210 aa)). The segment at 1-218 (MSQSSGGTST…GSNDPCNSNP (218 aa)) is disordered. One can recognise an EGF-like 1 domain in the interval 210-249 (SNDPCNSNPCKSPASCVKLYDSYFCLCLEGYYYNNSSSCV). Cystine bridges form between Cys214/Cys225, Cys219/Cys234, and Cys236/Cys248. N-linked (GlcNAc...) asparagine glycosylation is found at Asn243, Asn244, and Asn263. The SEA domain maps to 250 to 366 (KGTTFPGEIG…ERYFQQDRCD (117 aa)). EGF-like domains follow at residues 361-401 (QQDR…PFCV) and 401-441 (VAPT…GKCE). Disulfide bonds link Cys365-Cys378, Cys370-Cys384, Cys386-Cys400, Cys409-Cys427, and Cys429-Cys440. A helical membrane pass occupies residues 459-479 (ILTIVGTIAGAFILILLIVFI). Over 480 to 547 (VSMRSKNKKK…NHRSMPRPDY (68 aa)) the chain is Cytoplasmic. Residues 525-547 (KTGVPSQTSNPYANHRSMPRPDY) form a disordered region.

Homodimer of beta subunits. Post-translationally, cleaved into two subunits, alpha and beta, probably between the first EGF domain and the SEA domain. Beta subunit contains the cytoplasmic tail and alpha subunit the extracellular tail. The homooligomerization into dimers is dependent on intrachain disulfide bonds. In terms of processing, highly glycosylated.

Its subcellular location is the cell membrane. It localises to the secreted. Epithelial and hemopoietic transmembrane mucin that may play a role in cell signaling. This chain is Mucin-13 (Muc13), found in Rattus norvegicus (Rat).